The primary structure comprises 575 residues: Guanine nucleotide-binding protein-like 3-like protein (575 aa).

Positions 1–30 (MMKLRHKNKKPGKGSKGCKKPAKQNGKKAA) are enriched in basic residues. The interval 1 to 75 (MMKLRHKNKK…AAREQERHRR (75 aa)) is disordered. Positions 9–28 (KKPGKGSKGCKKPAKQNGKK) are required for nucleolar localization. Residues 42 to 72 (SNDHASREAELKKKRVGEMREKQQAAREQER) show a composition bias toward basic and acidic residues. Residues 51–79 (ELKKKRVGEMREKQQAAREQERHRRRTIE) are a coiled coil. Positions 118–303 (YKEFHKVVEY…LLDAPGIVPG (186 aa)) constitute a CP-type G domain. GTP-binding positions include 166-169 (NKID), 252-259 (GLPNVGKS), and 296-299 (DAPG). K470 is covalently cross-linked (Glycyl lysine isopeptide (Lys-Gly) (interchain with G-Cter in SUMO1)).

It belongs to the TRAFAC class YlqF/YawG GTPase family. In terms of assembly, interacts with MDM2; this interaction, which occurs in the nucleoplasm, stabilizes MDM2. Indirectly interacts with TP53, via MDM2-binding. Interacts with TERF1; this interaction probably occurs in the nucleoplasm and is increased during mitosis, when the nucleolus is disassembled. This binding may promote TERF1 homodimerization. Interacts with TERT.

The protein localises to the nucleus. It localises to the nucleolus. In terms of biological role, stabilizes TERF1 telomeric association by preventing TERF1 recruitment by PML. Stabilizes TERF1 protein by preventing its ubiquitination and hence proteasomal degradation. Does so by interfering with TERF1-binding to FBXO4 E3 ubiquitin-protein ligase. Required for cell proliferation. By stabilizing TRF1 protein during mitosis, promotes metaphase-to-anaphase transition. Stabilizes MDM2 protein by preventing its ubiquitination, and hence proteasomal degradation. By acting on MDM2, may affect TP53 activity. Required for normal processing of ribosomal pre-rRNA. Binds GTP. This is Guanine nucleotide-binding protein-like 3-like protein (GNL3L) from Bos taurus (Bovine).